The primary structure comprises 153 residues: UPF0178 protein MXAN_5526 (153 aa).

This sequence belongs to the UPF0178 family.

This chain is UPF0178 protein MXAN_5526, found in Myxococcus xanthus (strain DK1622).